A 736-amino-acid chain; its full sequence is Gephyrin (736 aa).

The interval Gln-14–Glu-153 is MPT Mo-transferase. Disordered regions lie at residues Asp-181–Ser-232 and Thr-260–Gln-290. Residues Pro-187–Thr-199 are compositionally biased toward pro residues. Positions Ala-261–Gln-290 are enriched in polar residues. The interval Ser-294–Leu-736 is MPT adenylyltransferase.

The protein in the N-terminal section; belongs to the MoaB/Mog family. In the C-terminal section; belongs to the MoeA family. As to quaternary structure, homotrimer, homodimer and homooligomer. Interacts with glycine receptors. Mg(2+) serves as cofactor.

Its subcellular location is the postsynaptic cell membrane. The protein localises to the cell membrane. The protein resides in the cytoplasm. It localises to the cytosol. It is found in the cytoskeleton. Its subcellular location is the cell projection. The protein localises to the dendrite. The protein resides in the postsynaptic density. It catalyses the reaction molybdopterin + ATP + H(+) = adenylyl-molybdopterin + diphosphate. It carries out the reaction adenylyl-molybdopterin + molybdate = Mo-molybdopterin + AMP + H(+). The protein operates within cofactor biosynthesis; molybdopterin biosynthesis. Functionally, microtubule-associated protein involved in membrane protein-cytoskeleton interactions. It is thought to anchor the inhibitory glycine receptor (GLYR) to subsynaptic microtubules. Acts as a major instructive molecule at inhibitory synapses, where it also clusters GABA type A receptors. Its function is as follows. Also has a catalytic activity and catalyzes two steps in the biosynthesis of the molybdenum cofactor. In the first step, molybdopterin is adenylated. Subsequently, molybdate is inserted into adenylated molybdopterin and AMP is released. In Gallus gallus (Chicken), this protein is Gephyrin (GPHN).